Here is a 171-residue protein sequence, read N- to C-terminus: Large ribosomal subunit protein uL10 (171 aa).

The protein belongs to the universal ribosomal protein uL10 family. As to quaternary structure, part of the ribosomal stalk of the 50S ribosomal subunit. The N-terminus interacts with L11 and the large rRNA to form the base of the stalk. The C-terminus forms an elongated spine to which L12 dimers bind in a sequential fashion forming a multimeric L10(L12)X complex.

Forms part of the ribosomal stalk, playing a central role in the interaction of the ribosome with GTP-bound translation factors. This Nitrosomonas europaea (strain ATCC 19718 / CIP 103999 / KCTC 2705 / NBRC 14298) protein is Large ribosomal subunit protein uL10.